The sequence spans 158 residues: Troponin C, isoform 1 (158 aa).

Position 1 is an N-acetylserine (Ser-1). EF-hand domains lie at 15–50 (EQIVVLRRAFDSFDRDKKGYISPETVSDILRMMGIK), 51–86 (VSSTSFKQIIEEIDEDGSGQIEFSEFLQLAAKFLIE), 91–126 (AMMKELKEAFRLYDKEGNGYITTQTLKEILHELDAR), and 127–158 (LTAEELVGIIEEIDEDGSGTVDFDEFMAMMTG). Residues Asp-64, Asp-66, Ser-68, Gln-70, and Glu-75 each contribute to the Ca(2+) site. Ca(2+) contacts are provided by Asp-140, Asp-142, Ser-144, Thr-146, and Glu-151.

This sequence belongs to the troponin C family.

Functionally, troponin is the central regulatory protein of striated muscle contraction. Tn consists of three components: Tn-I which is the inhibitor of actomyosin ATPase, Tn-T which contains the binding site for tropomyosin and Tn-C. The binding of calcium to Tn-C abolishes the inhibitory action of Tn on actin filaments. The chain is Troponin C, isoform 1 from Balanus nubilus (Giant acorn barnacle).